A 468-amino-acid chain; its full sequence is Bifunctional protein HldE (468 aa).

The ribokinase stretch occupies residues 1-315 (MAKKVEILVV…ELLRSRANAE (315 aa)). 192–195 (NRKE) lines the ATP pocket. Residue Asp260 is part of the active site. The interval 340–468 (FTNGCFDILH…IVKRIKDADK (129 aa)) is cytidylyltransferase.

The protein in the N-terminal section; belongs to the carbohydrate kinase PfkB family. This sequence in the C-terminal section; belongs to the cytidylyltransferase family. Homodimer.

It catalyses the reaction D-glycero-beta-D-manno-heptose 7-phosphate + ATP = D-glycero-beta-D-manno-heptose 1,7-bisphosphate + ADP + H(+). The enzyme catalyses D-glycero-beta-D-manno-heptose 1-phosphate + ATP + H(+) = ADP-D-glycero-beta-D-manno-heptose + diphosphate. It functions in the pathway nucleotide-sugar biosynthesis; ADP-L-glycero-beta-D-manno-heptose biosynthesis; ADP-L-glycero-beta-D-manno-heptose from D-glycero-beta-D-manno-heptose 7-phosphate: step 1/4. The protein operates within nucleotide-sugar biosynthesis; ADP-L-glycero-beta-D-manno-heptose biosynthesis; ADP-L-glycero-beta-D-manno-heptose from D-glycero-beta-D-manno-heptose 7-phosphate: step 3/4. In terms of biological role, catalyzes the phosphorylation of D-glycero-D-manno-heptose 7-phosphate at the C-1 position to selectively form D-glycero-beta-D-manno-heptose-1,7-bisphosphate. Its function is as follows. Catalyzes the ADP transfer from ATP to D-glycero-beta-D-manno-heptose 1-phosphate, yielding ADP-D-glycero-beta-D-manno-heptose. The sequence is that of Bifunctional protein HldE from Campylobacter curvus (strain 525.92).